The chain runs to 211 residues: Probable GTP-binding protein EngB (211 aa).

Positions 26-200 (SGIEVAFAGR…RQKLDNWFST (175 aa)) constitute an EngB-type G domain. GTP-binding positions include 34-41 (GRSNAGKS), 61-65 (GRTQL), 79-82 (DLPG), 146-149 (TKAD), and 179-181 (FSS). Mg(2+) is bound by residues Ser-41 and Thr-63.

It belongs to the TRAFAC class TrmE-Era-EngA-EngB-Septin-like GTPase superfamily. EngB GTPase family. Requires Mg(2+) as cofactor.

In terms of biological role, necessary for normal cell division and for the maintenance of normal septation. The sequence is that of Probable GTP-binding protein EngB from Pectobacterium carotovorum subsp. carotovorum (strain PC1).